Reading from the N-terminus, the 170-residue chain is Probable inosine/xanthosine triphosphatase (170 aa).

Position 7–12 (7–12) interacts with substrate; that stretch reads TTNPVK. Asp-37 is a Mg(2+) binding site.

Belongs to the YjjX NTPase family. Homodimer. Mg(2+) is required as a cofactor. The cofactor is Mn(2+).

It catalyses the reaction XTP + H2O = XDP + phosphate + H(+). It carries out the reaction ITP + H2O = IDP + phosphate + H(+). Its function is as follows. Phosphatase that hydrolyzes non-canonical purine nucleotides such as XTP and ITP to their respective diphosphate derivatives. Probably excludes non-canonical purines from DNA/RNA precursor pool, thus preventing their incorporation into DNA/RNA and avoiding chromosomal lesions. In Methanopyrus kandleri (strain AV19 / DSM 6324 / JCM 9639 / NBRC 100938), this protein is Probable inosine/xanthosine triphosphatase.